A 322-amino-acid chain; its full sequence is ATP-dependent 6-phosphofructokinase (322 aa).

An ATP-binding site is contributed by glycine 11. ADP is bound at residue 21 to 25 (RAVVR). ATP-binding positions include 72–73 (RC) and 102–105 (GDGS). Aspartate 103 provides a ligand contact to Mg(2+). Residue 127–129 (TID) coordinates substrate. Aspartate 129 serves as the catalytic Proton acceptor. Position 156 (arginine 156) interacts with ADP. Substrate-binding positions include arginine 164 and 171 to 173 (MGR). ADP contacts are provided by residues 187-189 (GAE), arginine 213, and 215-217 (KKH). Residues glutamate 224, arginine 245, and 251–254 (HVQR) each bind substrate.

This sequence belongs to the phosphofructokinase type A (PFKA) family. ATP-dependent PFK group I subfamily. Prokaryotic clade 'B1' sub-subfamily. Homotetramer. Mg(2+) is required as a cofactor.

The protein resides in the cytoplasm. It carries out the reaction beta-D-fructose 6-phosphate + ATP = beta-D-fructose 1,6-bisphosphate + ADP + H(+). It participates in carbohydrate degradation; glycolysis; D-glyceraldehyde 3-phosphate and glycerone phosphate from D-glucose: step 3/4. Allosterically activated by ADP and other diphosphonucleosides, and allosterically inhibited by phosphoenolpyruvate. In terms of biological role, catalyzes the phosphorylation of D-fructose 6-phosphate to fructose 1,6-bisphosphate by ATP, the first committing step of glycolysis. This is ATP-dependent 6-phosphofructokinase from Staphylococcus aureus (strain MRSA252).